Consider the following 258-residue polypeptide: Sugar fermentation stimulation protein homolog (258 aa).

Belongs to the SfsA family.

In Marinomonas sp. (strain MWYL1), this protein is Sugar fermentation stimulation protein homolog.